A 336-amino-acid polypeptide reads, in one-letter code: Prenytransferase ascA (336 aa).

The interval 1-26 (MAAKSRSPKRGTSEKTPLVEKEAPYQ) is disordered. The segment covering 11 to 23 (GTSEKTPLVEKEA) has biased composition (basic and acidic residues). The next 8 helical transmembrane spans lie at 52 to 72 (PHGN…ASAI), 74 to 94 (PTEL…TFLM), 131 to 151 (GHVF…SLPI), 179 to 199 (VILG…VGLP), 206 to 226 (FVPT…YDVV), 251 to 271 (LEGL…TLGY), 272 to 292 (LVGM…FGLV), and 314 to 334 (FAIL…DYVV).

Belongs to the UbiA prenyltransferase family. The cofactor is Mg(2+).

The protein resides in the membrane. It carries out the reaction orsellinate + (2E,6E)-farnesyl diphosphate = ilicicolinate B + diphosphate. It participates in secondary metabolite biosynthesis; terpenoid biosynthesis. Functionally, prenytransferase; part of the asc-1 gene cluster that mediates the biosynthesis of both ascochlorin and ascofuranone, a strong inhibitor of cyanide-insensitive alternative oxidases and a promising drug candidate against African trypanosomiasis. The first step in the pathway is performed by the non-reducing polyketide synthase ascC that produces orsellinic acid by condensing acetyl-CoA with 3 malonyl-CoA units. Orsellinic acid is then prenylated by the prenyltransferase ascA to yield ilicicolinic acid B. Ilicicolinic acid B is further reduced to ilicicolin B by the reductase ascB. The halogenase ascD then chlorinates ilicicolin B to produce ilicicolin A which is converted to ilicicolin A epoxide by the cytochrome P450 monooxygenase ascE that catalyzes stereoselective epoxidation of the terminal double bond of the prenyl group. Ilicicolin A epoxide is the last common precursor for the biosynthesis of ascofuranone and ascochlorin. The terpene cyclase ascF produces a monocyclic terpene, and the cyclization reaction is proposed to be initiated by protonation of the terminal epoxide of ilicicolin A epoxide to generate a monocyclic tertiarycation, which is followed by a series of hydride and methyl shifts with abstraction of proton, leading to the formation of the (14S,15R,19R)-trimethylcyclohexanone ring structure of ilicicolin C, which is finally reduced to ascochlorin by the dehydrogenase ascG. On the other hand, ilicicolin A epoxide is hydroxylated by the cytochrome P450 monooxygenase ascH, and the resultant product is cyclized by the terpene cyclase ascI to ascofuranol via protonation-initiated epoxide ring opening, which facilitates the 6-endo-tet cyclization to form the tetrahy-drofuran ring. Finally, ascofuranol is oxidized into ascofuranone by ascJ. This chain is Prenytransferase ascA, found in Acremonium egyptiacum (Oospora egyptiaca).